A 488-amino-acid chain; its full sequence is E3 ubiquitin-protein ligase XIAP (488 aa).

BIR repeat units follow at residues 40-105 (RLAS…KFIN), 176-241 (RLQT…YFVL), and 266-329 (RLET…QFLI). Zn(2+) is bound by residues C298, C301, H318, and C325. Residues 441–476 (CKVCMDRRITIVFIPCGHLVACAVCADVLDKCPICC) form an RING-type zinc finger.

Belongs to the IAP family. In terms of assembly, monomer, and homodimer. Degraded in a 2-step mechanism; a caspase-independent first step and a caspase-dependent second step. Stabilized indirectly by MAPK, which acts to delay caspase activation, rather than directly phosphorylating xiap.

The protein localises to the cytoplasm. It localises to the nucleus. The enzyme catalyses S-ubiquitinyl-[E2 ubiquitin-conjugating enzyme]-L-cysteine + [acceptor protein]-L-lysine = [E2 ubiquitin-conjugating enzyme]-L-cysteine + N(6)-ubiquitinyl-[acceptor protein]-L-lysine.. Functionally, multi-functional protein which regulates not only caspases and apoptosis, but also acts as an E3 ubiquitin-protein ligase mediating ubiquitination and subsequent proteasomal degradation of its target proteins. Acts as a direct caspase inhibitor. E3 ubiquitin-protein ligase that acts as an important regulator of innate immunity by mediating 'Lys-63'-linked polyubiquitination of ripk2 downstream of NOD1 and NOD2, thereby transforming ripk2 into a scaffolding protein for downstream effectors, ultimately leading to activation of the NF-kappa-B and MAP kinases signaling. A key apoptotic suppressor in eggs. Acts as a positive regulator of Wnt signaling. The protein is E3 ubiquitin-protein ligase XIAP (xiap) of Xenopus laevis (African clawed frog).